Here is a 120-residue protein sequence, read N- to C-terminus: MAQDNKATDRRRARVRRTLRARAYGKPRLSVFRSSKQIYCQIIDDEAGLTLAAASSLEKSARESLKTGADVEAARAIGKLIAERATAAGVTDVVFDRGSYLYHGRVKALAEGAREGGLNF.

The protein belongs to the universal ribosomal protein uL18 family. As to quaternary structure, part of the 50S ribosomal subunit; part of the 5S rRNA/L5/L18/L25 subcomplex. Contacts the 5S and 23S rRNAs.

Its function is as follows. This is one of the proteins that bind and probably mediate the attachment of the 5S RNA into the large ribosomal subunit, where it forms part of the central protuberance. This is Large ribosomal subunit protein uL18 from Methylocella silvestris (strain DSM 15510 / CIP 108128 / LMG 27833 / NCIMB 13906 / BL2).